Consider the following 164-residue polypeptide: Reticulon-like protein B22 (164 aa).

A Reticulon domain is found at Met-1–Thr-164. Transmembrane regions (helical) follow at residues Ser-30–Phe-50 and Leu-117–Cys-137.

The protein resides in the endoplasmic reticulum membrane. The sequence is that of Reticulon-like protein B22 (RTNLB22) from Arabidopsis thaliana (Mouse-ear cress).